The following is a 288-amino-acid chain: Bifunctional protein FolD (288 aa).

Residues 166-168 (GRS), S191, and I232 contribute to the NADP(+) site.

This sequence belongs to the tetrahydrofolate dehydrogenase/cyclohydrolase family. Homodimer.

It catalyses the reaction (6R)-5,10-methylene-5,6,7,8-tetrahydrofolate + NADP(+) = (6R)-5,10-methenyltetrahydrofolate + NADPH. The catalysed reaction is (6R)-5,10-methenyltetrahydrofolate + H2O = (6R)-10-formyltetrahydrofolate + H(+). It participates in one-carbon metabolism; tetrahydrofolate interconversion. Catalyzes the oxidation of 5,10-methylenetetrahydrofolate to 5,10-methenyltetrahydrofolate and then the hydrolysis of 5,10-methenyltetrahydrofolate to 10-formyltetrahydrofolate. The sequence is that of Bifunctional protein FolD from Rickettsia canadensis (strain McKiel).